Consider the following 215-residue polypeptide: 16S rRNA (adenine(1408)-N(1))-methyltransferase (215 aa).

S-adenosyl-L-methionine-binding positions include G32, D55, 87-88, 102-107, and 191-193; these read AE, LMPWGS, and TSW.

This sequence belongs to the methyltransferase superfamily. Kanamycin-apramycin resistance family.

The catalysed reaction is adenosine(1408) in 16S rRNA + S-adenosyl-L-methionine = N(1)-methyladenosine(1408) in 16S rRNA + S-adenosyl-L-homocysteine + H(+). Its function is as follows. Specifically methylates the N(1) position of adenine 1408 in 16S rRNA. Confers resistance to various aminoglycosides. This Streptoalloteichus hindustanus protein is 16S rRNA (adenine(1408)-N(1))-methyltransferase (kamB).